We begin with the raw amino-acid sequence, 359 residues long: ATP-dependent kinase YFH7 (359 aa).

Residue 31-39 (GPPGSGKST) participates in ATP binding.

The protein belongs to the YFH7 family.

Its function is as follows. ATP-dependent kinase that could be involved in endoplasmic reticulum membrane assembly. The polypeptide is ATP-dependent kinase YFH7 (YFH7) (Vanderwaltozyma polyspora (strain ATCC 22028 / DSM 70294 / BCRC 21397 / CBS 2163 / NBRC 10782 / NRRL Y-8283 / UCD 57-17) (Kluyveromyces polysporus)).